The sequence spans 273 residues: Putative pyruvate, phosphate dikinase regulatory protein (273 aa).

149-156 (GPSRTSKT) provides a ligand contact to ADP.

The protein belongs to the pyruvate, phosphate/water dikinase regulatory protein family. PDRP subfamily.

The enzyme catalyses N(tele)-phospho-L-histidyl/L-threonyl-[pyruvate, phosphate dikinase] + ADP = N(tele)-phospho-L-histidyl/O-phospho-L-threonyl-[pyruvate, phosphate dikinase] + AMP + H(+). The catalysed reaction is N(tele)-phospho-L-histidyl/O-phospho-L-threonyl-[pyruvate, phosphate dikinase] + phosphate + H(+) = N(tele)-phospho-L-histidyl/L-threonyl-[pyruvate, phosphate dikinase] + diphosphate. In terms of biological role, bifunctional serine/threonine kinase and phosphorylase involved in the regulation of the pyruvate, phosphate dikinase (PPDK) by catalyzing its phosphorylation/dephosphorylation. The polypeptide is Putative pyruvate, phosphate dikinase regulatory protein (Rickettsia typhi (strain ATCC VR-144 / Wilmington)).